A 359-amino-acid polypeptide reads, in one-letter code: Stearoyl-CoA desaturase (359 aa).

At 1–72 the chain is on the cytoplasmic side; sequence MPAHLLQDDI…EGPSPKVEYV (72 aa). Residues 73–93 traverse the membrane as a helical segment; that stretch reads WRNIILMSLLHLGALYGITLI. Position 75 (asparagine 75) interacts with substrate. At 94–97 the chain is on the lumenal side; sequence PTCK. Residues 98 to 118 traverse the membrane as a helical segment; it reads FYTWLWGVFYYFVSALGITAG. The Cytoplasmic segment spans residues 119–217; it reads AHRLWSHRSY…EKLVMFQRRY (99 aa). Fe cation is bound by residues histidine 120 and histidine 125. A Histidine box-1 motif is present at residues 120 to 125; sequence HRLWSH. 3 residues coordinate substrate: asparagine 148, arginine 155, and aspartate 156. Residues histidine 157, histidine 160, and histidine 161 each contribute to the Fe cation site. The short motif at 157-161 is the Histidine box-2 element; the sequence is HRAHH. Residues arginine 188 and lysine 189 each contribute to the substrate site. 2 positions are modified to phosphoserine: serine 198 and serine 203. Residues 218 to 237 traverse the membrane as a helical segment; it reads YKPGLLMMCFILPTLVPWYF. Topologically, residues 238-241 are lumenal; it reads WGET. The helical transmembrane segment at 242-263 threads the bilayer; that stretch reads FQNSVFVATFLRYAVVLNATWL. Residue tryptophan 262 coordinates substrate. The Cytoplasmic segment spans residues 264-359; it reads VNSAAHLFGY…RTGDGNYKSG (96 aa). Residues histidine 269, histidine 298, histidine 301, and histidine 302 each coordinate Fe cation. A Histidine box-3 motif is present at residues 298–302; that stretch reads HNYHH.

This sequence belongs to the fatty acid desaturase type 1 family. In terms of assembly, may self-associate and form homodimers. Fe(2+) is required as a cofactor. As to expression, detected in fetal liver, lung and brain. Highly expressed in adult adipose tissue, and at lower levels in adult brain and lung.

The protein resides in the endoplasmic reticulum membrane. The catalysed reaction is octadecanoyl-CoA + 2 Fe(II)-[cytochrome b5] + O2 + 2 H(+) = (9Z)-octadecenoyl-CoA + 2 Fe(III)-[cytochrome b5] + 2 H2O. It carries out the reaction hexadecanoyl-CoA + 2 Fe(II)-[cytochrome b5] + O2 + 2 H(+) = (9Z)-hexadecenoyl-CoA + 2 Fe(III)-[cytochrome b5] + 2 H2O. Stearoyl-CoA desaturase that utilizes O(2) and electrons from reduced cytochrome b5 to introduce the first double bond into saturated fatty acyl-CoA substrates. Catalyzes the insertion of a cis double bond at the delta-9 position into fatty acyl-CoA substrates including palmitoyl-CoA and stearoyl-CoA. Gives rise to a mixture of 16:1 and 18:1 unsaturated fatty acids. Plays an important role in lipid biosynthesis. Plays an important role in regulating the expression of genes that are involved in lipogenesis and in regulating mitochondrial fatty acid oxidation. Plays an important role in body energy homeostasis. Contributes to the biosynthesis of membrane phospholipids, cholesterol esters and triglycerides. This is Stearoyl-CoA desaturase (SCD) from Homo sapiens (Human).